The following is a 137-amino-acid chain: Urease subunit beta (137 aa).

A disordered region spans residues 118-137; that stretch reads IIAEENKVSENANKESGYNR. Over residues 126–137 the composition is skewed to polar residues; it reads SENANKESGYNR.

This sequence belongs to the urease beta subunit family. Heterotrimer of UreA (gamma), UreB (beta) and UreC (alpha) subunits. Three heterotrimers associate to form the active enzyme.

The protein resides in the cytoplasm. The enzyme catalyses urea + 2 H2O + H(+) = hydrogencarbonate + 2 NH4(+). The protein operates within nitrogen metabolism; urea degradation; CO(2) and NH(3) from urea (urease route): step 1/1. The polypeptide is Urease subunit beta (Staphylococcus xylosus).